Reading from the N-terminus, the 441-residue chain is Arginine biosynthesis bifunctional protein ArgJ, mitochondrial (441 aa).

Thr177, Lys204, Thr215, Glu301, Asn436, and Ser441 together coordinate substrate. Thr215 serves as the catalytic Nucleophile.

Belongs to the ArgJ family. In terms of assembly, heterodimer of an alpha and a beta chain. In terms of processing, the alpha and beta chains are autoproteolytically processed from a single precursor protein within the mitochondrion.

Its subcellular location is the mitochondrion matrix. The catalysed reaction is N(2)-acetyl-L-ornithine + L-glutamate = N-acetyl-L-glutamate + L-ornithine. It carries out the reaction L-glutamate + acetyl-CoA = N-acetyl-L-glutamate + CoA + H(+). Its pathway is amino-acid biosynthesis; L-arginine biosynthesis; L-ornithine and N-acetyl-L-glutamate from L-glutamate and N(2)-acetyl-L-ornithine (cyclic): step 1/1. The protein operates within amino-acid biosynthesis; L-arginine biosynthesis; N(2)-acetyl-L-ornithine from L-glutamate: step 1/4. Catalyzes two activities which are involved in the cyclic version of arginine biosynthesis: the synthesis of acetylglutamate from glutamate and acetyl-CoA, and of ornithine by transacetylation between acetylornithine and glutamate. The polypeptide is Arginine biosynthesis bifunctional protein ArgJ, mitochondrial (Lachancea thermotolerans (strain ATCC 56472 / CBS 6340 / NRRL Y-8284) (Yeast)).